The primary structure comprises 91 residues: Small ribosomal subunit protein uS19 (91 aa).

Belongs to the universal ribosomal protein uS19 family.

Its function is as follows. Protein S19 forms a complex with S13 that binds strongly to the 16S ribosomal RNA. This Alcanivorax borkumensis (strain ATCC 700651 / DSM 11573 / NCIMB 13689 / SK2) protein is Small ribosomal subunit protein uS19.